Consider the following 198-residue polypeptide: Probable GTP-binding protein EngB (198 aa).

In terms of domain architecture, EngB-type G spans 21-195 (NIPEVCFVGR…YDALIRLLEV (175 aa)). GTP-binding positions include 29 to 36 (GRSNVGKS), 56 to 60 (GKTRL), 75 to 78 (DAPG), 142 to 145 (TKLD), and 174 to 176 (VSN). S36 and T58 together coordinate Mg(2+).

It belongs to the TRAFAC class TrmE-Era-EngA-EngB-Septin-like GTPase superfamily. EngB GTPase family. It depends on Mg(2+) as a cofactor.

In terms of biological role, necessary for normal cell division and for the maintenance of normal septation. This Mesoplasma florum (strain ATCC 33453 / NBRC 100688 / NCTC 11704 / L1) (Acholeplasma florum) protein is Probable GTP-binding protein EngB.